The sequence spans 511 residues: Maturase K (511 aa).

It belongs to the intron maturase 2 family. MatK subfamily.

It is found in the plastid. The protein localises to the chloroplast. Its function is as follows. Usually encoded in the trnK tRNA gene intron. Probably assists in splicing its own and other chloroplast group II introns. This chain is Maturase K, found in Nardus stricta (Mat-grass).